The primary structure comprises 170 residues: Viral interleukin-10 homolog (170 aa).

The first 23 residues, methionine 1–glycine 23, serve as a signal peptide directing secretion. Intrachain disulfides connect cysteine 27–cysteine 119 and cysteine 73–cysteine 125. Positions glutamate 97–lysine 145 form a coiled coil. Asparagine 127 carries N-linked (GlcNAc...) asparagine; by host glycosylation.

This sequence belongs to the IL-10 family. Homodimer.

Its subcellular location is the secreted. In terms of biological role, inhibits IFN-gamma synthesis. Down-regulates the expression of the host TAP1 gene (transporter associated with antigen processing), thereby affecting the transport of peptides into the endoplasmic reticulum and subsequent peptide loading by MHC class I molecules. In consequence, infected cells are masked for immune recognition by cytotoxic T-lymphocytes. The sequence is that of Viral interleukin-10 homolog from Epstein-Barr virus (strain AG876) (HHV-4).